The following is a 1617-amino-acid chain: Mitogen-activated protein kinase kinae kinase bck1 (1617 aa).

9 disordered regions span residues 1 to 73 (MDGQ…SQLQ), 167 to 199 (GPVH…RTMP), 211 to 253 (SVAS…GGMS), 345 to 399 (RQIH…SPNL), 455 to 555 (DHRR…SSSY), 568 to 633 (KRSK…LRGK), 739 to 820 (GVPL…ISPE), 832 to 1144 (EHKR…RGDI), and 1164 to 1277 (DIDL…EILR). The segment covering 19-28 (TQPSQSHMLS) has biased composition (low complexity). The segment covering 44 to 60 (VMPPPPPGPPPGPPPGP) has biased composition (pro residues). Residues 220-248 (TAQNHQSQTGQTNEPTKSPSHRQNNSNTL) show a composition bias toward polar residues. Polar residues predominate over residues 482-504 (KSGSPATQHATLNQGLSSSSTGD). The segment covering 524–533 (RYYESRKGQE) has biased composition (basic and acidic residues). Polar residues-rich tracts occupy residues 535–555 (IRPS…SSSY) and 586–596 (ESPTSPVNLRQ). Basic and acidic residues-rich tracts occupy residues 832–841 (EHKREVERKQ) and 871–885 (FDER…KKAD). 2 stretches are compositionally biased toward polar residues: residues 897-907 (PQESYTLTRIN) and 956-980 (GGKQ…PQSS). 2 stretches are compositionally biased toward basic and acidic residues: residues 1128 to 1140 (EDER…DSFA) and 1189 to 1198 (PENDLHKKEN). Polar residues-rich tracts occupy residues 1199–1208 (QPSSSYTGEM) and 1257–1272 (NQAS…NQKS). Residues 1323–1596 (IIRGQLIGKG…QTLLTRHPFC (274 aa)) form the Protein kinase domain. ATP contacts are provided by residues 1329-1337 (IGKGTYGRV) and K1352. Residue D1453 is the Proton acceptor of the active site.

This sequence belongs to the protein kinase superfamily. STE Ser/Thr protein kinase family. MAP kinase kinase subfamily.

The enzyme catalyses L-seryl-[protein] + ATP = O-phospho-L-seryl-[protein] + ADP + H(+). It catalyses the reaction L-threonyl-[protein] + ATP = O-phospho-L-threonyl-[protein] + ADP + H(+). Functionally, mitogen-activated kinase kinase kinase (MAPKKK), part of the cell wall integrity (CWI) signaling pathway composed by three protein kinases bck1, mkk2 and mpkA and responsible for the maintaining of cell-wall integrity balance. The CWI pathway also regulates the oxidative stress response, as well as the production of some secondary metabolites including pyomelanin. The protein is Mitogen-activated protein kinase kinae kinase bck1 of Aspergillus fumigatus (strain CBS 144.89 / FGSC A1163 / CEA10) (Neosartorya fumigata).